The primary structure comprises 41 residues: Large ribosomal subunit protein bL36A (41 aa).

The protein belongs to the bacterial ribosomal protein bL36 family.

The chain is Large ribosomal subunit protein bL36A from Aeromonas salmonicida (strain A449).